The chain runs to 220 residues: Type IV major pilin protein PilA (220 aa).

Residues 1-12 (MRVSRFNPRNRG) constitute a propeptide, leader sequence. Phe-13 carries the N-methylphenylalanine modification. The chain crosses the membrane as a helical span at residues 13-33 (FTLIELMIVVAIIGILAAIAI).

This sequence belongs to the N-Me-Phe pilin family.

The protein localises to the fimbrium. It localises to the membrane. With respect to regulation, the two-component PilS2/PilR2 is required for proper assembly of T4P and regulation. Major component of the type IV pili that are required for social gliding motility through cycles of extension and retraction. Extended pili are composed of thousands of copies of PilA and retract upon binding to extracellular polysaccharides and thereby pull the cell forward. This Myxococcus xanthus (strain DK1622) protein is Type IV major pilin protein PilA (pilA).